Here is a 147-residue protein sequence, read N- to C-terminus: Myoglobin (147 aa).

The region spanning 2-141 (ADFDAVLKFW…VIADLEANYK (140 aa)) is the Globin domain. Residue His-60 coordinates nitrite. His-60 lines the O2 pocket. His-89 is a binding site for heme b.

Belongs to the globin family. Monomeric.

The protein localises to the cytoplasm. It localises to the sarcoplasm. It carries out the reaction Fe(III)-heme b-[protein] + nitric oxide + H2O = Fe(II)-heme b-[protein] + nitrite + 2 H(+). The catalysed reaction is H2O2 + AH2 = A + 2 H2O. Functionally, monomeric heme protein which primary function is to store oxygen and facilitate its diffusion within muscle tissues. Reversibly binds oxygen through a pentacoordinated heme iron and enables its timely and efficient release as needed during periods of heightened demand. Depending on the oxidative conditions of tissues and cells, and in addition to its ability to bind oxygen, it also has a nitrite reductase activity whereby it regulates the production of bioactive nitric oxide. Under stress conditions, like hypoxia and anoxia, it also protects cells against reactive oxygen species thanks to its pseudoperoxidase activity. In Sarda chiliensis (Pacific bonito), this protein is Myoglobin (mb).